A 130-amino-acid chain; its full sequence is RxLR effector protein PITG_14783 (130 aa).

The signal sequence occupies residues Met1–Ala20. Residues Ala27–Leu58 are disordered. Residues Arg38–Arg56 carry the RxLR-dEER motif.

Belongs to the RxLR effector family.

It is found in the secreted. The protein resides in the host nucleus. Its subcellular location is the host cytoplasm. Effector that enhances P.infestans colonization of Nicotiana benthamiana leaves. In Phytophthora infestans (strain T30-4) (Potato late blight agent), this protein is RxLR effector protein PITG_14783.